The primary structure comprises 831 residues: SID1 transmembrane family member 1 (831 aa).

Residues 1-19 (MLDCPRLALLCALPWLLRA) form the signal peptide. Over 20–308 (AVPGHRAEPL…SVKGSVYVKS (289 aa)) the chain is Extracellular. 4 N-linked (GlcNAc...) asparagine glycosylation sites follow: N67, N83, N136, and N281. The chain crosses the membrane as a helical span at residues 309–329 (SLFSVFVFLSFYLGCLLVVFV). The Cytoplasmic segment spans residues 330–441 (HHMRFQRKPV…DRRIVSKKYK (112 aa)). The segment at 354 to 408 (VSHPITASTPEGSNYGAIDESSSSPGRQMSSSDGGQPCHSDTDSSVEESDFDTMP) is disordered. The segment covering 374–385 (SSSSPGRQMSSS) has biased composition (low complexity). Positions 397–408 (SSVEESDFDTMP) are enriched in acidic residues. The chain crosses the membrane as a helical span at residues 442–462 (IYFWNIITIAVFYALPVMQLV). The Extracellular segment spans residues 463–493 (ITYQTVVNVTGNQDICYYNFLCAHPLGVLSA). N470 carries N-linked (GlcNAc...) asparagine glycosylation. A helical transmembrane segment spans residues 494-514 (FNNILSNLGHVLLGFLFLLIV). At 515 to 540 (LRRDLLHRRALEAKDIFAMEYGIPKH) the chain is on the cytoplasmic side. The chain crosses the membrane as a helical span at residues 541–561 (FGLFYAMGIALMMEGVLSACY). Residues 562-571 (HVCPNYSNFQ) lie on the Extracellular side of the membrane. N-linked (GlcNAc...) asparagine glycosylation occurs at N566. The chain crosses the membrane as a helical span at residues 572-589 (FDTSFMYMIAGLCMLKLY). Over 590-599 (QTRHPDINAS) the chain is Cytoplasmic. A helical transmembrane segment spans residues 600–620 (AYSAYASFAVVITLTVLGVVF). At 621–625 (GKNDV) the chain is on the extracellular side. A helical transmembrane segment spans residues 626-646 (WFWIIFSAIHVLASLALSTQI). The Cytoplasmic segment spans residues 647 to 687 (YYMGRFKIDVSDTDLGIFRRAAMVFYTDCIQQCSRPLYMDR). Residues 688-708 (MVLLIVGNLVNWSFALFGLIY) traverse the membrane as a helical segment. Residues 709 to 714 (RPRDFA) lie on the Extracellular side of the membrane. Residues 715–735 (SYMLGIFICNLLLYLAFYIIM) traverse the membrane as a helical segment. At 736 to 745 (KLRSSEKVLP) the chain is on the cytoplasmic side. Residues 746–766 (LPVFCIVATAVVWAAALYFFF) form a helical membrane-spanning segment. Residues 767-795 (QNLSSWEGTPAESREKNRECVLLGFFDDH) are Extracellular-facing. Residue N768 is glycosylated (N-linked (GlcNAc...) asparagine). The chain crosses the membrane as a helical span at residues 796-816 (DIWHFLSATALFFSFLVLLTL). The Cytoplasmic segment spans residues 817-831 (DDDLDVVRRDQIPVF).

Belongs to the SID1 family.

Its subcellular location is the membrane. Functionally, in vitro binds long double-stranded RNA (dsRNA) (500 and 700 base pairs), but not dsRNA shorter than 300 bp. Not involved in RNA autophagy, a process in which RNA is directly imported into lysosomes in an ATP-dependent manner, and degraded. This is SID1 transmembrane family member 1 (Sidt1) from Rattus norvegicus (Rat).